Consider the following 290-residue polypeptide: Fructose-1,6-bisphosphatase class 1 (290 aa).

Residues E78, D96, L98, and D99 each coordinate Mg(2+). Substrate-binding positions include 99–102 (DGSS), Y201, and K226. A Mg(2+)-binding site is contributed by E232.

The protein belongs to the FBPase class 1 family. In terms of assembly, homotetramer. Requires Mg(2+) as cofactor.

The protein resides in the cytoplasm. The catalysed reaction is beta-D-fructose 1,6-bisphosphate + H2O = beta-D-fructose 6-phosphate + phosphate. Its pathway is carbohydrate biosynthesis; gluconeogenesis. This chain is Fructose-1,6-bisphosphatase class 1, found in Helicobacter pylori (strain J99 / ATCC 700824) (Campylobacter pylori J99).